Here is an 897-residue protein sequence, read N- to C-terminus: MLEIFDKLGYKKQKCKTCGHEFYAQVDRDTCGDAPCDEYEFIGNPATDKPYTLYEIQQVFREFLEKEGHTPIKRYPILAKRWRDDVFLVGASIFCFQPWVTSGMVKPPANPLEIEQPSVRLNDVDNVGRTGRHMTCFTMGSHTVINTEENFIYWEDETIRLCHEFFKYIGINTEEICFIKSWWSGGGNEGPCYEVCVRGVELATLVFIQYKTLDNGEKEEIPIKVVDTGYGLERIAWISQGTPTAYDACFAPVVDKLKELTDVKVNTDILARNAQIAGMMDIEDIGDIKELRQQVANSLGITLDELLESAEPMEAIYIIADHTRCLAFMLADGIIPSNVKEGYLARLVLRRTIRFMKELNMKESLAEVMGIQLEFLTKFYPEIKDSEDHIMNIISLEEERYQSTIKKGTSIVKRSIKRLKKEGKTEMPLDMLMDLYDAHGIPPETVVEIAGDNFTVNVPDNFFTLVAGAHEKDTSNKKESFEIDYPETDLLFYKDFNQKEFEAEVLGVVEKDGKNTLVFDKTVFYPEGGGQPSDVGTISVDGAVVNINYAEKVNNVVLHHVDGDVDLDNFVGKKVEGKIDWNRRITLARHHSATHLIVAAARKILGEHIWQAGAQKGVSRSRIDLSHYKRISQEELNEIEKLANEYVMDNIELDIKFYTRDEAESLYGFKLYQGGIVPGKSIRVVKIPGIDVQACAGTHVLRTGDIGPIKINKTERVQDGVERIDFSAGTAAVDSIQNENKLLRESSGIFKVDDDQLPKTCDRFFSEWKAQKNEIDKLKSEIASLKMNSLADDVTEINGLKVVKQLIDADFKELQKIATDFTDNDKADVVLMGNNDGKIVGAASQNAIDAGIKVNEIIKKAAGVLGGGGGGRLTLAQGAGPKCENMNEALNIAIDLI.

Zn(2+)-binding residues include H591, H595, C695, and H699.

This sequence belongs to the class-II aminoacyl-tRNA synthetase family. Zn(2+) serves as cofactor.

It localises to the cytoplasm. It catalyses the reaction tRNA(Ala) + L-alanine + ATP = L-alanyl-tRNA(Ala) + AMP + diphosphate. Functionally, catalyzes the attachment of alanine to tRNA(Ala) in a two-step reaction: alanine is first activated by ATP to form Ala-AMP and then transferred to the acceptor end of tRNA(Ala). Also edits incorrectly charged Ser-tRNA(Ala) and Gly-tRNA(Ala) via its editing domain. The polypeptide is Alanine--tRNA ligase (Methanobrevibacter smithii (strain ATCC 35061 / DSM 861 / OCM 144 / PS)).